The following is a 178-amino-acid chain: Large ribosomal subunit protein uL10 (178 aa).

It belongs to the universal ribosomal protein uL10 family. Part of the ribosomal stalk of the 50S ribosomal subunit. The N-terminus interacts with L11 and the large rRNA to form the base of the stalk. The C-terminus forms an elongated spine to which L12 dimers bind in a sequential fashion forming a multimeric L10(L12)X complex.

Forms part of the ribosomal stalk, playing a central role in the interaction of the ribosome with GTP-bound translation factors. The protein is Large ribosomal subunit protein uL10 of Dictyoglomus turgidum (strain DSM 6724 / Z-1310).